The chain runs to 101 residues: Small ribosomal subunit protein uS14 (101 aa).

This sequence belongs to the universal ribosomal protein uS14 family. In terms of assembly, part of the 30S ribosomal subunit. Contacts proteins S3 and S10.

In terms of biological role, binds 16S rRNA, required for the assembly of 30S particles and may also be responsible for determining the conformation of the 16S rRNA at the A site. This is Small ribosomal subunit protein uS14 from Klebsiella pneumoniae (strain 342).